The chain runs to 399 residues: Acetate kinase (399 aa).

A Mg(2+)-binding site is contributed by asparagine 7. An ATP-binding site is contributed by lysine 14. Arginine 89 contributes to the substrate binding site. Aspartate 146 acts as the Proton donor/acceptor in catalysis. ATP is bound by residues histidine 206 to glycine 210, aspartate 280 to arginine 282, and glycine 328 to asparagine 332. Mg(2+) is bound at residue glutamate 382.

Belongs to the acetokinase family. As to quaternary structure, homodimer. Requires Mg(2+) as cofactor. Mn(2+) serves as cofactor.

It is found in the cytoplasm. The catalysed reaction is acetate + ATP = acetyl phosphate + ADP. It functions in the pathway metabolic intermediate biosynthesis; acetyl-CoA biosynthesis; acetyl-CoA from acetate: step 1/2. Catalyzes the formation of acetyl phosphate from acetate and ATP. Can also catalyze the reverse reaction. The polypeptide is Acetate kinase (Campylobacter fetus subsp. fetus (strain 82-40)).